Reading from the N-terminus, the 104-residue chain is NADH-quinone oxidoreductase subunit K (104 aa).

3 helical membrane passes run 7–27 (LSHY…GIFL), 33–53 (IVIL…LVSF), and 67–87 (LLVL…LVVF).

It belongs to the complex I subunit 4L family. In terms of assembly, NDH-1 is composed of 14 different subunits. Subunits NuoA, H, J, K, L, M, N constitute the membrane sector of the complex.

The protein localises to the cell inner membrane. It carries out the reaction a quinone + NADH + 5 H(+)(in) = a quinol + NAD(+) + 4 H(+)(out). In terms of biological role, NDH-1 shuttles electrons from NADH, via FMN and iron-sulfur (Fe-S) centers, to quinones in the respiratory chain. The immediate electron acceptor for the enzyme in this species is believed to be ubiquinone. Couples the redox reaction to proton translocation (for every two electrons transferred, four hydrogen ions are translocated across the cytoplasmic membrane), and thus conserves the redox energy in a proton gradient. The sequence is that of NADH-quinone oxidoreductase subunit K from Xanthobacter autotrophicus (strain ATCC BAA-1158 / Py2).